A 255-amino-acid chain; its full sequence is Homeobox-leucine zipper protein ATHB-23 (255 aa).

The homeobox DNA-binding region spans 68-127; it reads MGEKKRRLNMEQLKALEKDFELGNKLESDRKLELARALGLQPRQIAIWFQNRRARSKTKQ. Residues 128-163 are leucine-zipper; it reads LEKDYDMLKRQFESLRDENEVLQTQNQKLQAQVMAL.

This sequence belongs to the HD-ZIP homeobox family. Class I subfamily. Expressed in young leaves, in the adaxial domain of leaf primordia and the rib meristem. Expressed in the styles of flowers and siliques.

It is found in the nucleus. Its function is as follows. Probable transcription factor. The sequence is that of Homeobox-leucine zipper protein ATHB-23 (ATHB-23) from Arabidopsis thaliana (Mouse-ear cress).